Reading from the N-terminus, the 331-residue chain is Vacuolar protein sorting-associated protein 26B (331 aa).

The interval 310 to 331 (AAQRYEGSNPEPTSAQAKEETD) is disordered.

It belongs to the VPS26 family. Component of the heterotrimeric retromer cargo-selective complex (CSC) which is believed to associate with variable sorting nexins to form functionally distinct retromer complex variants.

It localises to the cytoplasm. Its subcellular location is the membrane. The protein resides in the endosome. In terms of biological role, acts as a component of the retromer cargo-selective complex (CSC). The CSC is believed to be the core functional component of retromer or respective retromer complex variants acting to prevent missorting of selected transmembrane cargo proteins into the lysosomal degradation pathway. Retromer mediates retrograde transport of cargo proteins from endosomes to the trans-Golgi network (TGN). In Danio rerio (Zebrafish), this protein is Vacuolar protein sorting-associated protein 26B (vps26b).